The sequence spans 213 residues: KHG/KDPG aldolase (213 aa).

Glutamate 45 functions as the Proton acceptor in the catalytic mechanism. The pyruvate site is built by arginine 49, threonine 73, and lysine 133. The active-site Schiff-base intermediate with substrate is lysine 133.

The protein belongs to the KHG/KDPG aldolase family. Homotrimer.

It localises to the cytoplasm. The enzyme catalyses 2-dehydro-3-deoxy-6-phospho-D-gluconate = D-glyceraldehyde 3-phosphate + pyruvate. It catalyses the reaction (4S)-4-hydroxy-2-oxoglutarate = glyoxylate + pyruvate. The protein operates within carbohydrate acid metabolism; 2-dehydro-3-deoxy-D-gluconate degradation; D-glyceraldehyde 3-phosphate and pyruvate from 2-dehydro-3-deoxy-D-gluconate: step 2/2. It participates in carbohydrate metabolism; glyoxylate and dicarboxylate metabolism. Involved in the degradation of glucose via the Entner-Doudoroff pathway. Catalyzes the reversible, stereospecific retro-aldol cleavage of 2-keto-3-deoxy-6-phosphogluconate (KDPG) to pyruvate and D-glyceraldehyde-3-phosphate. In addition to its KDPG aldolase activity, catalyzes the reversible cleavage of 2-keto-4-hydroxyglutarate (KHG) to glyoxylate and pyruvate. The enzyme is stereoselective for the S-enantiomer of KHG. Cleavage of KHG could serve in tricarboxylic acid (TCA) cycle regulation or, when operating in the reverse direction, in the detoxification of glyoxylate. The sequence is that of KHG/KDPG aldolase (eda) from Escherichia coli O157:H7.